Here is a 335-residue protein sequence, read N- to C-terminus: DDRGK domain-containing protein 1 (335 aa).

At 1–6 (MGDTYS) the chain is on the lumenal side. Residues 7 to 27 (LVLVAGYLSIFLFIGAIGYFY) traverse the membrane as a helical segment. Residues 28–335 (LSKPRIPSSN…NNDQDPVDTN (308 aa)) lie on the Cytoplasmic side of the membrane. The tract at residues 37–124 (NVNEQQQQQQ…GEDIGVVAPG (88 aa)) is disordered. 2 stretches are compositionally biased toward low complexity: residues 41–56 (QQQQ…QQPQ) and 91–103 (SSGS…TNSD). The segment covering 104 to 117 (NYDDDNGQEGEGED) has biased composition (acidic residues).

It belongs to the DDRGK1 family.

It is found in the endoplasmic reticulum membrane. Functionally, substrate adapter for ufmylation, the covalent attachment of the ubiquitin-like modifier UFM1 to substrate proteins. The polypeptide is DDRGK domain-containing protein 1 (Dictyostelium discoideum (Social amoeba)).